Consider the following 349-residue polypeptide: GMP reductase (349 aa).

Residue leucine 108 to alanine 131 coordinates NADP(+). Residues glycine 181 and glycine 183 each coordinate K(+). Residue cysteine 186 is the Thioimidate intermediate of the active site. Isoleucine 216–valine 239 is an NADP(+) binding site.

It belongs to the IMPDH/GMPR family. GuaC type 1 subfamily. In terms of assembly, homotetramer.

It catalyses the reaction IMP + NH4(+) + NADP(+) = GMP + NADPH + 2 H(+). Its function is as follows. Catalyzes the irreversible NADPH-dependent deamination of GMP to IMP. It functions in the conversion of nucleobase, nucleoside and nucleotide derivatives of G to A nucleotides, and in maintaining the intracellular balance of A and G nucleotides. In Buchnera aphidicola subsp. Schizaphis graminum (strain Sg), this protein is GMP reductase.